The chain runs to 392 residues: NAC domain-containing protein 58 (392 aa).

An NAC domain is found at 9–173 (LPPGFRFHPT…DWVLCRIYKK (165 aa)). The interval 317 to 345 (STSAGAVVEPPAVTGKRKRSSDGGEPTIQ) is disordered.

As to expression, expressed in leaves, nodes, internodes and mature seeds. Highly expressed in roots. Expressed in leaf sheaths, flag leaves and inflorescences. Expressed in primary and lateral roots, particularly in the vascular tissues. Expressed in the primary phloem of the culm and leaf sheaths. Expressed principally in the primary phloem and in the peripheral zone of the leaf vascular bundles. Expressed in the floral tissues.

It localises to the nucleus. Functionally, transcription factor that acts as a positive regulator of the jasmonate (JA) pathway to mediate leaf senescence. May directly regulate LOX2, AOC, AOS2, AOC1 and OPR7, which are genes involved in the biosynthesis of JA. Regulates positively leaf senescence by directly targeting senescence-associated genes (SAGs) related to chlorophyll degradation, nutrient transport and other genes associated with abscisic acid-induced leaf senescence. Transcription activator that plays a role in mediating abiotic stress responses through the abscisic acid (ABA) pathway. Possesses transcriptional activator activity in yeast. This chain is NAC domain-containing protein 58, found in Oryza sativa subsp. japonica (Rice).